Consider the following 69-residue polypeptide: Large ribosomal subunit protein bL31 (69 aa).

4 residues coordinate Zn(2+): C17, C19, C37, and C40.

The protein belongs to the bacterial ribosomal protein bL31 family. Type A subfamily. As to quaternary structure, part of the 50S ribosomal subunit. Zn(2+) is required as a cofactor.

Functionally, binds the 23S rRNA. This Thermoanaerobacter pseudethanolicus (strain ATCC 33223 / 39E) (Clostridium thermohydrosulfuricum) protein is Large ribosomal subunit protein bL31.